We begin with the raw amino-acid sequence, 279 residues long: Diaminopimelate epimerase (279 aa).

The substrate site is built by asparagine 13 and asparagine 66. Cysteine 75 (proton donor) is an active-site residue. Substrate is bound by residues 76-77 (GN), asparagine 162, asparagine 195, and 213-214 (ER). Cysteine 222 (proton acceptor) is an active-site residue. Position 223–224 (223–224 (GT)) interacts with substrate.

Belongs to the diaminopimelate epimerase family. As to quaternary structure, homodimer.

It localises to the cytoplasm. The catalysed reaction is (2S,6S)-2,6-diaminopimelate = meso-2,6-diaminopimelate. It participates in amino-acid biosynthesis; L-lysine biosynthesis via DAP pathway; DL-2,6-diaminopimelate from LL-2,6-diaminopimelate: step 1/1. Functionally, catalyzes the stereoinversion of LL-2,6-diaminopimelate (L,L-DAP) to meso-diaminopimelate (meso-DAP), a precursor of L-lysine and an essential component of the bacterial peptidoglycan. The polypeptide is Diaminopimelate epimerase (Synechocystis sp. (strain ATCC 27184 / PCC 6803 / Kazusa)).